The following is a 241-amino-acid chain: Ribose-5-phosphate isomerase A (241 aa).

Residues 28-31, 83-86, and 96-99 contribute to the substrate site; these read TGST, DGAD, and KGGG. Catalysis depends on glutamate 105, which acts as the Proton acceptor. Lysine 123 lines the substrate pocket.

It belongs to the ribose 5-phosphate isomerase family. Homodimer.

It carries out the reaction aldehydo-D-ribose 5-phosphate = D-ribulose 5-phosphate. The protein operates within carbohydrate degradation; pentose phosphate pathway; D-ribose 5-phosphate from D-ribulose 5-phosphate (non-oxidative stage): step 1/1. In terms of biological role, catalyzes the reversible conversion of ribose-5-phosphate to ribulose 5-phosphate. The chain is Ribose-5-phosphate isomerase A from Bradyrhizobium diazoefficiens (strain JCM 10833 / BCRC 13528 / IAM 13628 / NBRC 14792 / USDA 110).